The following is a 210-amino-acid chain: uncharacterized protein (210 aa).

A CS domain is found at 2–91 (SRHPEVKWAQ…AEAKWWKKLV (90 aa)). The tract at residues 165–210 (GMGGMGGMDEFEDESDDEEEVSKPQDAEKAAEAGKSQESDAKTETS) is disordered. A compositionally biased stretch (acidic residues) spans 173–184 (DEFEDESDDEEE). Residues 185–210 (VSKPQDAEKAAEAGKSQESDAKTETS) show a composition bias toward basic and acidic residues.

This is an uncharacterized protein from Oryza sativa subsp. indica (Rice).